The following is a 615-amino-acid chain: Melanopsin-B (615 aa).

The Extracellular portion of the chain corresponds to 1 to 19 (MDMDRGFYRKVDVPDHAHY). The chain crosses the membrane as a helical span at residues 20-40 (VIAFFVLIIGVVGVTGNALVM). Residues 41 to 56 (YAFLCNKKLRTPPNYF) are Cytoplasmic-facing. Residues 57-77 (IMNLAVSDFLMAITQSPIFFI) form a helical membrane-spanning segment. Residues 78–93 (NSLFKEWIFGETGCRM) lie on the Extracellular side of the membrane. Cys-91 and Cys-169 are joined by a disulfide. A helical membrane pass occupies residues 94–114 (YAFCGALFGITSMINLLAISL). Topologically, residues 115 to 136 (DRYIVITKPPQAIRWVSGRRTM) are cytoplasmic. A helical transmembrane segment spans residues 137-157 (VVILLVWLYSLAWSLAPLLGW). Residues 158–189 (SSYIPEGLMTSCTWDYVTSTPANKGYTLMLCC) are Extracellular-facing. The helical transmembrane segment at 190–210 (FVFFIPLGIISYCYLCMFLAI) threads the bilayer. Residues 211–244 (RSAGREIERLGTQVRKSTLMQQQTIKTEWKLTKV) lie on the Cytoplasmic side of the membrane. The chain crosses the membrane as a helical span at residues 245-265 (AFVVIIVYVHSWSPYACVTLI). Residues 266–279 (AWAGYGSHLSPYSK) lie on the Extracellular side of the membrane. The helical transmembrane segment at 280–300 (AVPAVIAKASAIYNPFIYAII) threads the bilayer. The residue at position 287 (Lys-287) is an N6-(retinylidene)lysine. Over 301–615 (HSKYRDTLAE…RNLEESFMAL (315 aa)) the chain is Cytoplasmic. Disordered stretches follow at residues 390–420 (LGRSKEHRGPPAQQNRQTRSSDTLEQATVAD) and 465–502 (NKHPNNNHKNHNNRHNGNNNNEEHEYSGKGGRHCQNHP). The span at 401 to 415 (AQQNRQTRSSDTLEQ) shows a compositional bias: polar residues. Positions 469–478 (NNNHKNHNNR) are enriched in basic residues.

Belongs to the G-protein coupled receptor 1 family. Opsin subfamily. As to expression, expressed in the inner nuclear layer of the retina, possibly in amacrine and ganglion cells. Expressed in a subpopulation of neurons in the dorsal habenula.

Its subcellular location is the cell membrane. Photoreceptor implicated in non-image-forming responses to light. The chain is Melanopsin-B (opn4b) from Gadus morhua (Atlantic cod).